The following is a 603-amino-acid chain: Phosphogluconate dehydratase (603 aa).

Positions 154 and 221 each coordinate [4Fe-4S] cluster.

It belongs to the IlvD/Edd family. [4Fe-4S] cluster serves as cofactor.

It catalyses the reaction 6-phospho-D-gluconate = 2-dehydro-3-deoxy-6-phospho-D-gluconate + H2O. Its pathway is carbohydrate metabolism; Entner-Doudoroff pathway. Catalyzes the dehydration of 6-phospho-D-gluconate to 2-dehydro-3-deoxy-6-phospho-D-gluconate. The chain is Phosphogluconate dehydratase from Escherichia coli O157:H7.